The primary structure comprises 507 residues: uncharacterized protein (507 aa).

A compositionally biased stretch (low complexity) spans 1 to 12 (MEKSISSISKAS). The interval 1–20 (MEKSISSISKASMNSDEKLD) is disordered. Helical transmembrane passes span 57–74 (FDFRILPLLALLYLFNAL), 100–120 (IMISIFYIPFVLCAFPFSYLY), 126–146 (ARILPFFMLSFGAMSLCQAAV), 157–177 (WFLGMAESAVLPGVVYYLTTF), 189–209 (IFYAAANVSSAFGGLLAYGVF), 221–241 (YLFLIEGGVTFLCAIVIFLVL), 283–303 (VFKHPIAILWLLEEMALGVPL), 326–346 (LMTVAPAISGAIWLLVFAFIS), 353–373 (GIVLIAAISTTMIGFIVYGSI), 379–399 (IGVSYFACFLMTAGAAASSVL), 416–436 (VFTSVGVPLANVMGLVSANIF), and 445–465 (VPALGITAGFGGLGILLVASI).

The protein belongs to the major facilitator superfamily. Allantoate permease family.

It is found in the endoplasmic reticulum. The protein localises to the membrane. This is an uncharacterized protein from Schizosaccharomyces pombe (strain 972 / ATCC 24843) (Fission yeast).